Reading from the N-terminus, the 234-residue chain is MNDSQDKIVAIVPAAGIGSRMGAEIPKQYLLIDEKTILQLTLELLLTHPKIDCVVVALHPEDQFFKGLPLSSHHKLHTVVGGSERADSVLACLNHLGGDCWAMVHDAARPCLTHGDIDKLIASRQRFPQGAILAAPVRDTMKRGNADGTVKETVCRERLWHALTPQLFPAALLKGNLEQALAQGANITDEASAMEWAGVSPGLVDGRVDNIKITHPDDLLLAGLFLGNAHSLER.

It belongs to the IspD/TarI cytidylyltransferase family. IspD subfamily.

The catalysed reaction is 2-C-methyl-D-erythritol 4-phosphate + CTP + H(+) = 4-CDP-2-C-methyl-D-erythritol + diphosphate. Its pathway is isoprenoid biosynthesis; isopentenyl diphosphate biosynthesis via DXP pathway; isopentenyl diphosphate from 1-deoxy-D-xylulose 5-phosphate: step 2/6. Catalyzes the formation of 4-diphosphocytidyl-2-C-methyl-D-erythritol from CTP and 2-C-methyl-D-erythritol 4-phosphate (MEP). This chain is 2-C-methyl-D-erythritol 4-phosphate cytidylyltransferase, found in Shewanella sediminis (strain HAW-EB3).